A 249-amino-acid chain; its full sequence is Probable septum site-determining protein MinC (249 aa).

The tract at residues 116 to 149 (AAVSPPPPPPPPPARAEPAAPVARPAPGRMQRNA) is disordered. The segment covering 119–130 (SPPPPPPPPPAR) has biased composition (pro residues). The segment covering 131–142 (AEPAAPVARPAP) has biased composition (low complexity).

Belongs to the MinC family. As to quaternary structure, interacts with MinD and FtsZ.

Its function is as follows. Cell division inhibitor that blocks the formation of polar Z ring septums. Rapidly oscillates between the poles of the cell to destabilize FtsZ filaments that have formed before they mature into polar Z rings. Prevents FtsZ polymerization. The sequence is that of Probable septum site-determining protein MinC from Xanthomonas campestris pv. campestris (strain B100).